The following is a 368-amino-acid chain: MTTPSAELPALARIRDDVRAMQAYVVADATGYLKMDAMENPFGLPPALQAALGQRLGQLALNRYPGTRQNDLKAALAAYAGEPAGSAVLLGNGSDELISLVALACARAQATVLAPVPGFVMYAMSAQLQGLGFVGVPLTADFELDEAAMLDAIAQHRPAITFLAYPNNPTATLWDEAVVQRIIDAAGAQGGIVVMDEAYQPFASRSWIERMRAQPERNGHVLLMRTLSKFGLAGVRLGYMIGPAALVAEVDKVRPPYNVSVLNTEAALFALEHADVFAAQADELRAARTELLAALRAMPGIERVWDSQANMVLVRVPDAARAYEGMKARKVLVKNVSTMHPLLAGCLRLTVGSSADNAQMLTALQASL.

An N6-(pyridoxal phosphate)lysine modification is found at K229.

The protein belongs to the class-II pyridoxal-phosphate-dependent aminotransferase family. Histidinol-phosphate aminotransferase subfamily. In terms of assembly, homodimer. Pyridoxal 5'-phosphate serves as cofactor.

The catalysed reaction is L-histidinol phosphate + 2-oxoglutarate = 3-(imidazol-4-yl)-2-oxopropyl phosphate + L-glutamate. The protein operates within amino-acid biosynthesis; L-histidine biosynthesis; L-histidine from 5-phospho-alpha-D-ribose 1-diphosphate: step 7/9. This is Histidinol-phosphate aminotransferase from Acidovorax ebreus (strain TPSY) (Diaphorobacter sp. (strain TPSY)).